Reading from the N-terminus, the 159-residue chain is Ribosomal RNA large subunit methyltransferase H (159 aa).

S-adenosyl-L-methionine contacts are provided by residues leucine 76, glycine 108, and phenylalanine 127 to phenylalanine 132.

Belongs to the RNA methyltransferase RlmH family. Homodimer.

The protein localises to the cytoplasm. The enzyme catalyses pseudouridine(1915) in 23S rRNA + S-adenosyl-L-methionine = N(3)-methylpseudouridine(1915) in 23S rRNA + S-adenosyl-L-homocysteine + H(+). In terms of biological role, specifically methylates the pseudouridine at position 1915 (m3Psi1915) in 23S rRNA. This chain is Ribosomal RNA large subunit methyltransferase H, found in Staphylococcus aureus (strain Mu3 / ATCC 700698).